A 387-amino-acid polypeptide reads, in one-letter code: BTB and MATH domain-containing protein 38 (387 aa).

In terms of domain architecture, MATH spans 79–204 (EGMLKLEIPN…NEMVTVTARV (126 aa)). Residues 228 to 295 (CDMTLVINKQ…IYPCHKPITS (68 aa)) form the BTB domain.

The polypeptide is BTB and MATH domain-containing protein 38 (bath-38) (Caenorhabditis elegans).